Here is a 276-residue protein sequence, read N- to C-terminus: NH(3)-dependent NAD(+) synthetase (276 aa).

43 to 50 (GISGGVDS) serves as a coordination point for ATP. Asp-49 provides a ligand contact to Mg(2+). Arg-146 is a binding site for deamido-NAD(+). Position 166 (Thr-166) interacts with ATP. Glu-171 is a Mg(2+) binding site. Deamido-NAD(+) contacts are provided by Lys-179 and Asp-186. Positions 195 and 217 each coordinate ATP. Residue 266–267 (HK) coordinates deamido-NAD(+).

This sequence belongs to the NAD synthetase family. Homodimer.

It catalyses the reaction deamido-NAD(+) + NH4(+) + ATP = AMP + diphosphate + NAD(+) + H(+). It functions in the pathway cofactor biosynthesis; NAD(+) biosynthesis; NAD(+) from deamido-NAD(+) (ammonia route): step 1/1. Catalyzes the ATP-dependent amidation of deamido-NAD to form NAD. Uses ammonia as a nitrogen source. This Shewanella frigidimarina (strain NCIMB 400) protein is NH(3)-dependent NAD(+) synthetase.